Reading from the N-terminus, the 452-residue chain is Tissue alpha-L-fucosidase (452 aa).

Residues 1 to 17 form the signal peptide; that stretch reads MLLLLLLLLVAAAQAVA. 4 N-linked (GlcNAc...) asparagine glycosylation sites follow: asparagine 227, asparagine 254, asparagine 368, and asparagine 378.

The protein belongs to the glycosyl hydrolase 29 family. In terms of assembly, homotetramer.

It is found in the lysosome. The catalysed reaction is an alpha-L-fucoside + H2O = L-fucose + an alcohol. It catalyses the reaction a neolactoside IV(2)-alpha-Fuc-nLc4Cer(d18:1(4E)) + H2O = a neolactoside nLc4Cer(d18:1(4E)) + L-fucose. It carries out the reaction a neolactoside IV(2)-alpha-Fuc-nLc4Cer(d18:0) + H2O = a neolactoside nLc4Cer(d18:0) + L-fucose. In terms of biological role, alpha-L-fucosidase is responsible for hydrolyzing the alpha-1,6-linked fucose joined to the reducing-end N-acetylglucosamine of the carbohydrate moieties of glycoproteins. The sequence is that of Tissue alpha-L-fucosidase (Fuca1) from Mus musculus (Mouse).